We begin with the raw amino-acid sequence, 735 residues long: Ethylene receptor 1 (735 aa).

Helical transmembrane passes span 23–43 (ISDF…IYFV), 54–74 (VLVQ…INLW), and 92–112 (VLTA…IPDL). Cu cation is bound by residues Cys-65 and His-69. The GAF domain occupies 158-307 (DRHTILKTTL…VVADQVAVAL (150 aa)). Residues 350–586 (VMNHEMRTPM…IFDVKLAISN (237 aa)) enclose the Histidine kinase domain. His-353 is modified (phosphohistidine; by autocatalysis). In terms of domain architecture, Response regulatory spans 609 to 726 (KVLVMDENGV…NMRNVLSDRL (118 aa)). Position 657 is a 4-aspartylphosphate (Asp-657). Residue Lys-711 forms a Glycyl lysine isopeptide (Lys-Gly) (interchain with G-Cter in ubiquitin) linkage.

Belongs to the ethylene receptor family. In terms of assembly, homodimer; disulfide-linked. It depends on Cu cation as a cofactor. Activation probably requires a transfer of a phosphate group between a His in the transmitter domain and an Asp of the receiver domain.

The protein resides in the endoplasmic reticulum membrane. It carries out the reaction ATP + protein L-histidine = ADP + protein N-phospho-L-histidine.. In terms of biological role, may act early in the ethylene signal transduction pathway, possibly as an ethylene receptor, or as a regulator of the pathway. In Brassica oleracea (Wild cabbage), this protein is Ethylene receptor 1 (ETR1).